The following is a 299-amino-acid chain: MATH domain and coiled-coil domain-containing protein At2g42460 (299 aa).

The MATH domain occupies 7-130; it reads QKTFTWKIEN…NNTLFIEVYI (124 aa). The stretch at 225-262 forms a coiled coil; that stretch reads FRVKWLKSKLDEISLARKKKVDADAARVQELEGKVKNQ.

The polypeptide is MATH domain and coiled-coil domain-containing protein At2g42460 (Arabidopsis thaliana (Mouse-ear cress)).